The primary structure comprises 453 residues: Na(+)/H(+) antiporter NhaA (453 aa).

12 consecutive transmembrane segments (helical) span residues 27–47, 78–98, 114–134, 143–163, 172–192, 201–221, 222–242, 249–269, 316–336, 346–366, 385–405, and 421–441; these read FLHIEALSGVVLLLAAAAALM, LHFWVNDALMAVFFLVAGMEI, ILPIVAAIGGVCLPAIIYFSF, GWAVPTATDIAFALGILALLG, IILLSLAIIDDIIAVLIIAFF, GLVIAIAGIALVLFFQWIGFA, SAWLYILPGAIIWWGLMVTGI, VILGMMTPVLPTRTLIAPLTI, PWVAYGVMPIFAFANAGVSFA, FLIVLGVVIGLFIGKPLGIIT, WAGILLIGFLAGIGFTMSIFV, and IGVLCGSGLSALIGLGYGLIY.

This sequence belongs to the NhaA Na(+)/H(+) (TC 2.A.33) antiporter family.

Its subcellular location is the cell inner membrane. The enzyme catalyses Na(+)(in) + 2 H(+)(out) = Na(+)(out) + 2 H(+)(in). Its function is as follows. Na(+)/H(+) antiporter that extrudes sodium in exchange for external protons. This Bartonella henselae (strain ATCC 49882 / DSM 28221 / CCUG 30454 / Houston 1) (Rochalimaea henselae) protein is Na(+)/H(+) antiporter NhaA.